The following is a 51-amino-acid chain: Ovomucoid (51 aa).

Residues 3 to 51 (VDCSGYPKPDCTLESFPLCGSDNQTYSNKCAFCNAAVERNVTLRHLGEC) enclose the Kazal-like domain. Disulfide bonds link Cys5-Cys35, Cys13-Cys32, and Cys21-Cys51. Residue Asn42 is glycosylated (N-linked (GlcNAc...) asparagine).

The protein localises to the secreted. The polypeptide is Ovomucoid (Rhynchotus rufescens (Red-winged tinamou)).